The primary structure comprises 567 residues: Arginine--tRNA ligase (567 aa).

A 'HIGH' region motif is present at residues 121–131 (ANPNGPLHVGH).

This sequence belongs to the class-I aminoacyl-tRNA synthetase family.

It is found in the cytoplasm. It carries out the reaction tRNA(Arg) + L-arginine + ATP = L-arginyl-tRNA(Arg) + AMP + diphosphate. The polypeptide is Arginine--tRNA ligase (Methanosarcina acetivorans (strain ATCC 35395 / DSM 2834 / JCM 12185 / C2A)).